The sequence spans 455 residues: Protein YmfN (455 aa).

It belongs to the phage terminase family.

This is Protein YmfN (ymfN) from Escherichia coli (strain K12).